A 74-amino-acid chain; its full sequence is uncharacterized protein (74 aa).

2 disordered regions span residues 1 to 26 and 46 to 74; these read MNGP…SGVF and ITNS…SFTQ. A helical membrane pass occupies residues 34–50; it reads VSNKSIMLISLKITNSP. Positions 47-74 are enriched in low complexity; that stretch reads TNSPNSNSRGSSSSSSTSKSSSKTSFTQ.

The protein localises to the membrane. This is an uncharacterized protein from Dictyostelium discoideum (Social amoeba).